A 1218-amino-acid polypeptide reads, in one-letter code: NACHT, LRR and PYD domains-containing protein 1 allele 2 (1218 aa).

Residues 1-61 form a disordered region; sequence MEESQSKQES…SLPGWSSTSK (61 aa). The span at 7–29 shows a compositional bias: polar residues; that stretch reads KQESNTRVAQHGSQQDVDPTFQT. The NACHT domain occupies 175–484; the sequence is QLVIIEGAAG…EFFAAMSYIL (310 aa). Residue 181–188 coordinates ATP; it reads GAAGIGKS. LRR repeat units follow at residues 343-364, 673-693, and 730-750; these read KERNTIIDFNLIGSIPVLLTLC, NLEELDLSGNPLSYSAVRSLC, and RLAELDLRLNDLGDNGVRQLC. Polar residues predominate over residues 799–815; sequence TMPTENTDGEESLTSSK. Residues 799–842 form a disordered region; sequence TMPTENTDGEESLTSSKQQQQQSGDKHMEPLGTDDDFWGPSGPV. Residues 835–968 form a ZU5 region; it reads FWGPSGPVST…HFAVLENPSF (134 aa). The FIIND domain maps to 835-1118; sequence FWGPSGPVST…LRPALPRMAS (284 aa). The UPA stretch occupies residues 969-1118; the sequence is SPMGVLLRMI…LRPALPRMAS (150 aa). The CARD domain maps to 1122–1211; that stretch reads DAPALLHFVD…HLIMDLLEKS (90 aa).

The protein belongs to the NLRP family. As to quaternary structure, interacts (via LRR repeats) with BCL2 and BCL2L1 (via the loop between motifs BH4 and BH3). Interacts with NOD2; this interaction is enhanced in the presence of muramyl dipeptide (MDP) and increases IL1B release. Interacts with EIF2AK2/PKR; this interaction requires EIF2AK2 activity, is accompanied by EIF2AK2 autophosphorylation and promotes inflammasome assembly in response to danger-associated signals. Interacts with MEFV; this interaction targets Nlrp1a to degradation by autophagy, hence preventing excessive IL1B- and IL18-mediated inflammation. Interacts with DPP9; leading to inhibit activation of the inflammasome. DPP9 acts via formation of a ternary complex, composed of a DPP9 homodimer, one full-length NLRP1 protein, and one cleaved C-terminus of Nlrp1a (NACHT, LRR and PYD domains-containing protein 1a, C-terminus). Interacts with DPP8; leading to inhibit activation of the inflammasome, probably via formation of a ternary complex with DPP8. Interacts with the C-terminal part of Nlrp1a (NACHT, LRR and PYD domains-containing protein 1a, C-terminus) in absence of pathogens and other damage-associated signals. In terms of assembly, interacts with the N-terminal part of Nlrp1a (NACHT, LRR and PYD domains-containing protein 1a, N-terminus) in absence of pathogens and other damage-associated signals. Homomultimer; forms the Nlrp1a inflammasome polymeric complex, a filament composed of homopolymers of this form in response to pathogens and other damage-associated signals. The Nlrp1a inflammasome polymeric complex directly recruits pro-caspase-1 (proCASP1) independently of PYCARD/ASC. Interacts (via CARD domain) with CASP1 (via CARD domain); leading to CASP1 activation. In terms of processing, autocatalytically cleaved. Autocatalytic cleavage in FIIND region occurs constitutively, prior to activation signals, and is required for inflammasome activity (IL1B release), possibly by facilitating CASP1 binding. Both N- and C-terminal parts remain associated non-covalently. (Microbial infection) Cleavage by B.anthracis lethal toxin (LT) endopeptidase promotes ubiquitination and degradation of the N-terminal part, releasing the cleaved C-terminal part of the protein (NACHT, LRR and PYD domains-containing protein 1a, C-terminus), which polymerizes and forms the Nlrp1a inflammasome. Post-translationally, ubiquitinated in response to pathogen-associated signals, leading to its degradation by the proteasome and subsequent release of the cleaved C-terminal part of the protein (NACHT, LRR and PYD domains-containing protein 1a, C-terminus), which polymerizes and forms the Nlrp1a inflammasome.

It is found in the cytoplasm. It localises to the cytosol. The protein resides in the nucleus. The protein localises to the inflammasome. Activated by cleavage by B.anthracis lethal toxin (LT) endopeptidase. Cleavage by LT promotes ubiquitination and degradation of the N-terminal part, releasing the cleaved C-terminal part of the protein (NACHT, LRR and PYD domains-containing protein 1a, C-terminus), which polymerizes and forms the Nlrp1a inflammasome. Nlrp1a inflammasome is inhibited by DPP8 and DPP9, which sequester the C-terminal fragment of Nlrp1a (NACHT, LRR and PYD domains-containing protein 1a, C-terminus) in a ternary complex, thereby preventing Nlrp1a oligomerization and activation. Nlrp1a inflammasome is weakly activated by Val-boroPro (Talabostat, PT-100), an inhibitor of dipeptidyl peptidases DPP8 and DPP9. Val-boroPro relieves inhibition of DPP8 and/or DPP9 by promoting disruption of the ternary complex, releasing its C-terminal part from autoinhibition. Weakly activated by Toxoplasma gondii. Its function is as follows. Acts as the sensor component of the Nlrp1a inflammasome, which mediates inflammasome activation in response to various pathogen-associated signals, leading to subsequent pyroptosis. Inflammasomes are supramolecular complexes that assemble in the cytosol in response to pathogens and other damage-associated signals and play critical roles in innate immunity and inflammation. Acts as a recognition receptor (PRR): recognizes specific pathogens and other damage-associated signals, such as B.anthracis lethal toxin (LT) or Val-boroPro inhibitor, and mediates the formation of the inflammasome polymeric complex. In response to pathogen-associated signals, the N-terminal part of Nlrp1a is degraded by the proteasome, releasing the cleaved C-terminal part of the protein (NACHT, LRR and PYD domains-containing protein 1a, C-terminus), which polymerizes to initiate the formation of the inflammasome complex: the inflammasome directly recruits pro-caspase-1 (proCASP1) independently of PYCARD/ASC and promotes caspase-1 (CASP1) activation, which subsequently cleaves and activates inflammatory cytokines IL1B and IL18 and gasdermin-D (GSDMD), leading to pyroptosis. In the absence of GSDMD expression, the Nlrp1a inflammasome is able to recruit and activate CASP8, leading to activation of gasdermin-E (GSDME). Functionally, constitutes the precursor of the Nlrp1a inflammasome, which mediates autoproteolytic processing within the FIIND domain to generate the N-terminal and C-terminal parts, which are associated non-covalently in absence of pathogens and other damage-associated signals. Regulatory part that prevents formation of the Nlrp1a inflammasome: in absence of pathogens and other damage-associated signals, interacts with the C-terminal part of Nlrp1a (NACHT, LRR and PYD domains-containing protein 1a, C-terminus), preventing activation of the Nlrp1a inflammasome. In response to pathogen-associated signals, this part is ubiquitinated by the N-end rule pathway and degraded by the proteasome, releasing the cleaved C-terminal part of the protein, which polymerizes and forms the Nlrp1a inflammasome. In terms of biological role, constitutes the active part of the Nlrp1a inflammasome. In absence of pathogens and other damage-associated signals, interacts with the N-terminal part of Nlrp1a (NACHT, LRR and PYD domains-containing protein 1a, N-terminus), preventing activation of the Nlrp1a inflammasome. In response to pathogen-associated signals, the N-terminal part of Nlrp1a is degraded by the proteasome, releasing this form, which polymerizes to form the Nlrp1a inflammasome complex: the Nlrp1a inflammasome complex then directly recruits pro-caspase-1 (proCASP1) and promotes caspase-1 (CASP1) activation, leading to gasdermin-D (GSDMD) cleavage and subsequent pyroptosis. The sequence is that of NACHT, LRR and PYD domains-containing protein 1 allele 2 from Rattus norvegicus (Rat).